An 86-amino-acid chain; its full sequence is Acyl-CoA-binding protein homolog 1 (86 aa).

The ACB domain maps to 1 to 86 (MTLSFDDAAA…VEELIAKYGA (86 aa)). Residues K13, 28–32 (YALFK), K50, K54, and Y73 each bind an acyl-CoA.

The protein belongs to the ACBP family.

In terms of biological role, binds medium- and long-chain acyl-CoA esters with very high affinity and may function as an intracellular carrier of acyl-CoA esters. This chain is Acyl-CoA-binding protein homolog 1 (acbp-1), found in Caenorhabditis elegans.